We begin with the raw amino-acid sequence, 598 residues long: Elongation factor 4 (598 aa).

Residues 5 to 187 (ANIRNFSIIA…ALVEFIPAPT (183 aa)) form the tr-type G domain. Residues 17–22 (DHGKST) and 134–137 (NKID) contribute to the GTP site.

This sequence belongs to the TRAFAC class translation factor GTPase superfamily. Classic translation factor GTPase family. LepA subfamily.

The protein resides in the cell inner membrane. The catalysed reaction is GTP + H2O = GDP + phosphate + H(+). In terms of biological role, required for accurate and efficient protein synthesis under certain stress conditions. May act as a fidelity factor of the translation reaction, by catalyzing a one-codon backward translocation of tRNAs on improperly translocated ribosomes. Back-translocation proceeds from a post-translocation (POST) complex to a pre-translocation (PRE) complex, thus giving elongation factor G a second chance to translocate the tRNAs correctly. Binds to ribosomes in a GTP-dependent manner. This chain is Elongation factor 4, found in Psychrobacter cryohalolentis (strain ATCC BAA-1226 / DSM 17306 / VKM B-2378 / K5).